We begin with the raw amino-acid sequence, 130 residues long: Small ribosomal subunit protein uS9 (130 aa).

The protein belongs to the universal ribosomal protein uS9 family.

This is Small ribosomal subunit protein uS9 from Shigella sonnei (strain Ss046).